The chain runs to 96 residues: C-C motif chemokine 20 (96 aa).

Residues 1 to 26 (MCCTKSLLLAALMSVLLLHLCGESEA) form the signal peptide. 2 disulfides stabilise this stretch: cysteine 32–cysteine 58 and cysteine 33–cysteine 74.

Belongs to the intercrine beta (chemokine CC) family. In terms of processing, C-terminal processed forms which lack 1, 3 or 6 amino acids are produced by proteolytic cleavage after secretion from peripheral blood monocytes. Expressed in the seminal plasma, endometrial fluid and follicular fluid (at protein level). Expressed predominantly in the liver, lymph nodes, appendix, peripheral blood lymphocytes, and fetal lung. Low levels seen in thymus, prostate, testis, small intestine and colon.

It localises to the secreted. In terms of biological role, acts as a ligand for C-C chemokine receptor CCR6. Signals through binding and activation of CCR6 and induces a strong chemotactic response and mobilization of intracellular calcium ions. The ligand-receptor pair CCL20-CCR6 is responsible for the chemotaxis of dendritic cells (DC), effector/memory T-cells and B-cells and plays an important role at skin and mucosal surfaces under homeostatic and inflammatory conditions, as well as in pathology, including cancer and various autoimmune diseases. CCL20 acts as a chemotactic factor that attracts lymphocytes and, slightly, neutrophils, but not monocytes. Involved in the recruitment of both the pro-inflammatory IL17 producing helper T-cells (Th17) and the regulatory T-cells (Treg) to sites of inflammation. Required for optimal migration of thymic natural regulatory T cells (nTregs) and DN1 early thymocyte progenitor cells. C-terminal processed forms have been shown to be equally chemotactically active for leukocytes. Positively regulates sperm motility and chemotaxis via its binding to CCR6 which triggers Ca2+ mobilization in the sperm which is important for its motility. Inhibits proliferation of myeloid progenitors in colony formation assays. May be involved in formation and function of the mucosal lymphoid tissues by attracting lymphocytes and dendritic cells towards epithelial cells. Possesses antibacterial activity towards E.coli ATCC 25922 and S.aureus ATCC 29213. The polypeptide is C-C motif chemokine 20 (CCL20) (Homo sapiens (Human)).